The primary structure comprises 145 residues: Functional amyloid chaperone FapA (145 aa).

Positions 1–27 (MRKRDKRLYHLLLVGCVLGSLSLTAQA) are cleaved as a signal peptide.

This sequence belongs to the FapA family. In terms of assembly, monomer in solution. Interacts with FapC but not FapB in vitro.

It localises to the periplasm. In terms of biological role, an intrinsically disordered chaperone for fibril amyloid FapC that guards against fibrillation, pro within the periplasm. Upon overexpression of the endogenous six-gene locus (fapA-fapF), cells form large clumps during liquid growth, make large amounts of biofilm and produce relatively unstable amyloid fibrils. The polypeptide is Functional amyloid chaperone FapA (Pseudomonas putida (strain ATCC 700007 / DSM 6899 / JCM 31910 / BCRC 17059 / LMG 24140 / F1)).